A 1403-amino-acid chain; its full sequence is DNA-directed RNA polymerase subunit beta' (1403 aa).

The Zn(2+) site is built by C68, C70, C83, and C86. Mg(2+)-binding residues include D459, D461, and D463. 4 residues coordinate Zn(2+): C814, C887, C894, and C897.

It belongs to the RNA polymerase beta' chain family. As to quaternary structure, the RNAP catalytic core consists of 2 alpha, 1 beta, 1 beta' and 1 omega subunit. When a sigma factor is associated with the core the holoenzyme is formed, which can initiate transcription. The cofactor is Mg(2+). Zn(2+) serves as cofactor.

The enzyme catalyses RNA(n) + a ribonucleoside 5'-triphosphate = RNA(n+1) + diphosphate. In terms of biological role, DNA-dependent RNA polymerase catalyzes the transcription of DNA into RNA using the four ribonucleoside triphosphates as substrates. This chain is DNA-directed RNA polymerase subunit beta', found in Solibacter usitatus (strain Ellin6076).